The chain runs to 176 residues: Ribosome maturation factor RimM (176 aa).

The 80-residue stretch at 97–176 (EDDFYWRDLI…QICVDWDPGF (80 aa)) folds into the PRC barrel domain.

Belongs to the RimM family. In terms of assembly, binds ribosomal protein uS19.

The protein resides in the cytoplasm. Its function is as follows. An accessory protein needed during the final step in the assembly of 30S ribosomal subunit, possibly for assembly of the head region. Essential for efficient processing of 16S rRNA. May be needed both before and after RbfA during the maturation of 16S rRNA. It has affinity for free ribosomal 30S subunits but not for 70S ribosomes. The chain is Ribosome maturation factor RimM from Colwellia psychrerythraea (strain 34H / ATCC BAA-681) (Vibrio psychroerythus).